The primary structure comprises 290 residues: 4-hydroxybenzoate octaprenyltransferase (290 aa).

Helical transmembrane passes span 33 to 53, 91 to 111, 116 to 136, 138 to 158, 165 to 185, 212 to 232, 237 to 257, and 269 to 289; these read LAAL…AVFV, LGVR…FVLV, WEAV…PFTK, FFAM…VIAF, VPAT…AYDT, VAAI…VLAP, WPLW…FTLI, and FSKS…GYLL.

It belongs to the UbiA prenyltransferase family. The cofactor is Mg(2+).

It localises to the cell inner membrane. The catalysed reaction is all-trans-octaprenyl diphosphate + 4-hydroxybenzoate = 4-hydroxy-3-(all-trans-octaprenyl)benzoate + diphosphate. It participates in cofactor biosynthesis; ubiquinone biosynthesis. Catalyzes the prenylation of para-hydroxybenzoate (PHB) with an all-trans polyprenyl group. Mediates the second step in the final reaction sequence of ubiquinone-8 (UQ-8) biosynthesis, which is the condensation of the polyisoprenoid side chain with PHB, generating the first membrane-bound Q intermediate 3-octaprenyl-4-hydroxybenzoate. The protein is 4-hydroxybenzoate octaprenyltransferase of Acidovorax ebreus (strain TPSY) (Diaphorobacter sp. (strain TPSY)).